The sequence spans 527 residues: Cytochrome P450 monooxygenase aba2 (527 aa).

The chain crosses the membrane as a helical span at residues 26–46; sequence TTVAVLVTVALIAQVLWKIFF. Asn-189, Asn-420, and Asn-448 each carry an N-linked (GlcNAc...) asparagine glycan. Position 460 (Cys-460) interacts with heme. N-linked (GlcNAc...) asparagine glycosylation occurs at Asn-464.

Belongs to the cytochrome P450 family. Heme serves as cofactor.

The protein resides in the membrane. The protein operates within hormone biosynthesis. In terms of biological role, cytochrome P450 monooxygenase; part of the gene cluster that mediates the biosynthesis of abscisic acid (ABA), a phytohormone that acts antagonistically toward salicylic acid (SA), jasmonic acid (JA) and ethylene (ETH) signaling, to impede plant defense responses. The first step of the pathway catalyzes the reaction from farnesyl diphosphate to alpha-ionylideneethane performed by the alpha-ionylideneethane synthase aba3 via a three-step reaction mechanism involving 2 neutral intermediates, beta-farnesene and allofarnesene. The cytochrome P450 monooxygenase aba1 might then be involved in the conversion of alpha-ionylideneethane to alpha-ionylideneacetic acid. Alpha-ionylideneacetic acid is further converted to abscisic acid in 2 steps involving the cytochrome P450 monooxygenase aba2 and the short-chain dehydrogenase/reductase aba4, via the intermediates 1'-deoxy-ABA or 1',4'-trans-diol-ABA, depending on the order of action of these 2 enzymes. Aba2 is responsible for the hydroxylation of carbon atom C-1' and aba4 might be involved in the oxidation of the C-4' carbon atom. The chain is Cytochrome P450 monooxygenase aba2 (aba2) from Botryotinia fuckeliana (strain B05.10) (Noble rot fungus).